We begin with the raw amino-acid sequence, 271 residues long: Neurexophilin-1 (271 aa).

Positions methionine 1–cysteine 21 are cleaved as a signal peptide. An II region spans residues alanine 22–leucine 97. Residues asparagine 23, asparagine 68, asparagine 93, asparagine 146, asparagine 156, and asparagine 162 are each glycosylated (N-linked (GlcNAc...) asparagine). Residues glutamine 98–phenylalanine 176 form an III region. Positions aspartate 177–aspartate 185 are IV (linker domain). Positions alanine 186–glycine 271 are v (Cys-rich).

This sequence belongs to the neurexophilin family. Post-translationally, may be proteolytically processed at the boundary between the N-terminal non-conserved and the central conserved domain in neuron-like cells. As to expression, highest level in brain.

The protein resides in the secreted. Functionally, may be signaling molecules that resemble neuropeptides. Ligand for alpha-neurexins. This Rattus norvegicus (Rat) protein is Neurexophilin-1 (Nxph1).